Consider the following 69-residue polypeptide: Cytoinsectotoxin-2a (69 aa).

It belongs to the cationic peptide 06 (cytoinsectotoxin) family. Expressed by the venom gland.

Its subcellular location is the secreted. Its function is as follows. Insecticidal and antimicrobial peptide. Has insecticidal activity against larvae of flesh fly S.carnaria. Has antibacterial activity against Gram-positive bacterium B.subtilis B-501 (MIC=1.25 uM) and Gram-negative bacterium E.coli DH5alpha (MIC=2.5 uM). This chain is Cytoinsectotoxin-2a, found in Lachesana tarabaevi (Spider).